The chain runs to 457 residues: Multidrug resistance protein MdtK (457 aa).

Residues 1-10 are Cytoplasmic-facing; that stretch reads MQKYISEARL. A helical membrane pass occupies residues 11–31; that stretch reads LLALAIPVILAQIAQTAMGFV. Over 32–52 the chain is Periplasmic; the sequence is DTVMAGGYSATDMAAVAIGTS. Residues 53-73 form a helical membrane-spanning segment; the sequence is IWLPAILFGHGLLLALTPVIA. Residues 74–92 lie on the Cytoplasmic side of the membrane; sequence QLNGSGRRERIAHQVRQGF. Residues 93–113 traverse the membrane as a helical segment; sequence WLAGFVSVLIMLVLWNAGYII. The Periplasmic portion of the chain corresponds to 114-126; it reads RSMENIDPALADK. Residues 127–147 traverse the membrane as a helical segment; the sequence is AVGYLRALLWGAPGYLFFQVA. Over 148–159 the chain is Cytoplasmic; that stretch reads RNQCEGLAKTKP. The chain crosses the membrane as a helical span at residues 160 to 180; the sequence is GMVMGFIGLLVNIPVNYIFIY. Residues 181-191 are Periplasmic-facing; it reads GHFGMPELSGV. A helical transmembrane segment spans residues 192-212; sequence GCGVATAAVYWAMFLAMVSYI. At 213 to 242 the chain is on the cytoplasmic side; the sequence is KRARSMRDIRNEKGTAKPDPAVMKRLIQLG. Residues 243–263 form a helical membrane-spanning segment; it reads LPIALALFFEVTLFAVVALLV. Residues 264–275 lie on the Periplasmic side of the membrane; sequence SPLGIVDVAGHQ. Residues 276-296 form a helical membrane-spanning segment; that stretch reads IALNFSSLMFVLPMSLAAAVT. At 297-313 the chain is on the cytoplasmic side; that stretch reads IRVGYRLGQGSTLDAQT. The chain crosses the membrane as a helical span at residues 314 to 334; sequence AARTGLMVGVCMATLTAIFTV. At 335–349 the chain is on the periplasmic side; sequence SLREQIALLYNDNPE. The helical transmembrane segment at 350–370 threads the bilayer; that stretch reads VVTLAAHLMLLAAVYQISDSI. Over 371–386 the chain is Cytoplasmic; that stretch reads QVIGSGILRGYKDTRS. Residues 387-407 traverse the membrane as a helical segment; sequence IFYITFTAYWVLGLPSGYILA. Residues 408 to 417 are Periplasmic-facing; the sequence is LTDLVVEPMG. Residues 418–438 traverse the membrane as a helical segment; sequence PAGFWIGFIIGLTSAAIMMML. Residues 439–457 lie on the Cytoplasmic side of the membrane; it reads RMRFLQRLPSAIILQRASR.

This sequence belongs to the multi antimicrobial extrusion (MATE) (TC 2.A.66.1) family. MdtK subfamily.

The protein localises to the cell inner membrane. Its function is as follows. Multidrug efflux pump that functions probably as a Na(+)/drug antiporter. The polypeptide is Multidrug resistance protein MdtK (Shigella dysenteriae serotype 1 (strain Sd197)).